The following is a 72-amino-acid chain: Translation initiation factor IF-1 2 (72 aa).

One can recognise an S1-like domain in the interval 1–72 (MAKEDTIQMQ…SRARIVFRAK (72 aa)).

Belongs to the IF-1 family. As to quaternary structure, component of the 30S ribosomal translation pre-initiation complex which assembles on the 30S ribosome in the order IF-2 and IF-3, IF-1 and N-formylmethionyl-tRNA(fMet); mRNA recruitment can occur at any time during PIC assembly.

The protein resides in the cytoplasm. Its function is as follows. One of the essential components for the initiation of protein synthesis. Stabilizes the binding of IF-2 and IF-3 on the 30S subunit to which N-formylmethionyl-tRNA(fMet) subsequently binds. Helps modulate mRNA selection, yielding the 30S pre-initiation complex (PIC). Upon addition of the 50S ribosomal subunit IF-1, IF-2 and IF-3 are released leaving the mature 70S translation initiation complex. The sequence is that of Translation initiation factor IF-1 2 from Chromobacterium violaceum (strain ATCC 12472 / DSM 30191 / JCM 1249 / CCUG 213 / NBRC 12614 / NCIMB 9131 / NCTC 9757 / MK).